A 433-amino-acid polypeptide reads, in one-letter code: L-lysine 2,3-aminomutase (433 aa).

The 213-residue stretch at 122–334 folds into the Radical SAM core domain; it reads HRYPDRVLFY…SLIGHTTGFA (213 aa). Cys136, Cys140, and Cys143 together coordinate [4Fe-4S] cluster. Cys279 lines the Zn(2+) pocket. The residue at position 348 (Lys348) is an N6-(pyridoxal phosphate)lysine. Residues Cys389, Cys392, and Cys396 each contribute to the Zn(2+) site.

This sequence belongs to the radical SAM superfamily. KamA family. [4Fe-4S] cluster serves as cofactor. It depends on pyridoxal 5'-phosphate as a cofactor. The cofactor is Zn(2+).

The catalysed reaction is L-lysine = (3S)-3,6-diaminohexanoate. Its function is as follows. Catalyzes the interconversion of L-alpha-lysine and L-beta-lysine. Is involved in the biosynthesis pathway of N6-acetyl-beta-lysine, a compatible solute produced by methanogenic archaea that helps cells to cope with salt stress. The protein is L-lysine 2,3-aminomutase (ablA) of Methanococcus maripaludis (strain DSM 14266 / JCM 13030 / NBRC 101832 / S2 / LL).